The primary structure comprises 672 residues: Cytadherence high molecular weight protein 3 (672 aa).

Tandem repeats lie at residues Tyr98–Gln100, Tyr106–Gln108, Pro160–Val162, Tyr197–Gln199, Tyr206–Gln208, Tyr211–Gln213, Tyr221–Gln223, Tyr226–Gln228, Tyr235–Gln237, Tyr249–Gln251, Pro288–Val290, Val310–Glu319, Pro312–Thr315, Pro316–Val318, Pro322–Val324, Val330–Glu339, Pro332–Thr335, Pro336–Val338, Pro354–Pro358, Pro385–Pro389, Pro396–Pro400, Pro402–Val404, Pro413–Val415, Pro424–Pro428, and Pro454–Val456. The tract at residues Tyr98–Gln251 is 9 X 3 AA repeats OF Y-D-Q. The 8 X 3 AA repeats of P-V-V stretch occupies residues Pro160–Val456. The segment at Gly177 to Tyr197 is disordered. Residues Val310–Glu339 are 2 X 10 AA repeats of V-E-P-T-P-T-P-V-V-E. The interval Pro312–Pro428 is 6 X 5 AA repeats of P-X-P-X-P.

The protein resides in the cell projection. Its subcellular location is the attachment organelle membrane. Its function is as follows. Component of the cytoskeleton-like structure which stabilizes the shape of the wall-less mycoplasma. This cytoskeleton-like network of accessory proteins containing HMW proteins 1 to 5 allows the proper anchoring of cytadhesin proteins in the mycoplasmal membrane at the attachment organelle. Essential for successful surface parasitism. This Mycoplasma pneumoniae (strain ATCC 29342 / M129 / Subtype 1) (Mycoplasmoides pneumoniae) protein is Cytadherence high molecular weight protein 3 (hmw3).